We begin with the raw amino-acid sequence, 321 residues long: Fibronectin type III domain-containing protein 8 (321 aa).

The Fibronectin type-III domain maps to 175 to 277; the sequence is VPEAPFVCEH…KPYKFATVAT (103 aa).

The protein is Fibronectin type III domain-containing protein 8 (FNDC8) of Bos taurus (Bovine).